A 354-amino-acid chain; its full sequence is Methionine import ATP-binding protein MetN (354 aa).

The region spanning 8 to 250 (LDHIDITFRQ…PKEALTQEFI (243 aa)) is the ABC transporter domain. Residue 42–49 (GYSGAGKS) coordinates ATP.

Belongs to the ABC transporter superfamily. Methionine importer (TC 3.A.1.24) family. As to quaternary structure, the complex is composed of two ATP-binding proteins (MetN), two transmembrane proteins (MetI) and a solute-binding protein (MetQ).

The protein localises to the cell membrane. The enzyme catalyses L-methionine(out) + ATP + H2O = L-methionine(in) + ADP + phosphate + H(+). It carries out the reaction D-methionine(out) + ATP + H2O = D-methionine(in) + ADP + phosphate + H(+). Part of the ABC transporter complex MetNIQ involved in methionine import. Responsible for energy coupling to the transport system. The polypeptide is Methionine import ATP-binding protein MetN (Streptococcus pyogenes serotype M12 (strain MGAS2096)).